The following is a 252-amino-acid chain: Carbohydrate deacetylase (252 aa).

Residues His59 and His122 each coordinate Mg(2+).

This sequence belongs to the YdjC deacetylase family. Homodimer. Mg(2+) serves as cofactor.

Its function is as follows. Probably catalyzes the deacetylation of acetylated carbohydrates an important step in the degradation of oligosaccharides. This is Carbohydrate deacetylase from Vibrio cholerae serotype O1 (strain ATCC 39315 / El Tor Inaba N16961).